A 307-amino-acid chain; its full sequence is Elongation factor Ts (307 aa).

Residues 79-82 (TDFV) form an involved in Mg(2+) ion dislocation from EF-Tu region.

Belongs to the EF-Ts family.

The protein resides in the cytoplasm. Associates with the EF-Tu.GDP complex and induces the exchange of GDP to GTP. It remains bound to the aminoacyl-tRNA.EF-Tu.GTP complex up to the GTP hydrolysis stage on the ribosome. The chain is Elongation factor Ts (tsf) from Bartonella quintana (strain Toulouse) (Rochalimaea quintana).